The sequence spans 447 residues: Chordin-like protein 1 (447 aa).

The first 22 residues, 1-22 (MDGMKYIISLFFIFVFLEGSKT), serve as a signal peptide directing secretion. VWFC domains are found at residues 30-95 (TYCV…PRCP) and 108-174 (KSCE…RVCR). N-linked (GlcNAc...) asparagine glycosylation is present at asparagine 113. Positions 174–176 (RGD) match the Cell attachment site motif. A disordered region spans residues 200–224 (SYLRSPYDPPPNRQAGGLPRFPGSR). A VWFC 3 domain is found at 253 to 318 (QVCVSNGKTY…IDGKCCKVCP (66 aa)). An N-linked (GlcNAc...) asparagine glycan is attached at asparagine 286.

Post-translationally, may be glycosylated. In terms of tissue distribution, expressed in heart, brain, lung, liver, kidney and testis.

Its subcellular location is the secreted. In terms of biological role, seems to antagonize the function of BMP4 by binding to it and preventing its interaction with receptors. Alters the fate commitment of neural stem cells from gliogenesis to neurogenesis. Contributes to neuronal differentiation of neural stem cells in the brain by preventing the adoption of a glial fate. May play a crucial role in dorsoventral axis formation. Antagonizes the function of BMP7 and may thus play an important role in the embryonic bone formation. Shows no inhibitory effect on the inducing activity of BMP2. Plays a role during anterior segment eye development. This is Chordin-like protein 1 (Chrdl1) from Mus musculus (Mouse).